Consider the following 533-residue polypeptide: Flavin-containing monooxygenase 5 (533 aa).

A Dimethylated arginine modification is found at Arg5. FAD contacts are provided by residues 10-14 (GGGVS), Glu33, and 41-42 (LW). Ser54 carries the post-translational modification Phosphoserine. At Tyr56 the chain carries Phosphotyrosine. Phosphoserine is present on Ser58. Residue 62-63 (NT) coordinates FAD. 196 to 199 (SGGD) is an NADP(+) binding site. Ser280 is modified (phosphoserine). Thr284 carries the phosphothreonine modification. Ser401 carries the phosphoserine modification. A helical transmembrane segment spans residues 513 to 533 (TMTIGKFMLALAFFAIIIAYF).

This sequence belongs to the FMO family. Requires FAD as cofactor. As to expression, expressed in fetal and adult liver.

The protein localises to the microsome membrane. It localises to the endoplasmic reticulum membrane. It carries out the reaction N,N-dimethylaniline + NADPH + O2 + H(+) = N,N-dimethylaniline N-oxide + NADP(+) + H2O. The enzyme catalyses NADPH + O2 + H(+) = H2O2 + NADP(+). The catalysed reaction is heptan-2-one + NADPH + O2 + H(+) = pentyl acetate + NADP(+) + H2O. It catalyses the reaction octan-3-one + NADPH + O2 + H(+) = pentyl propanoate + NADP(+) + H2O. It carries out the reaction octan-3-one + NADPH + O2 + H(+) = ethyl hexanoate + NADP(+) + H2O. The enzyme catalyses hexan-3-one + NADPH + O2 + H(+) = ethyl butanoate + NADP(+) + H2O. The catalysed reaction is hexan-3-one + NADPH + O2 + H(+) = propyl propanoate + NADP(+) + H2O. It catalyses the reaction heptan-4-one + NADPH + O2 + H(+) = propyl butanoate + NADP(+) + H2O. It carries out the reaction (2E)-geranial + NADPH + O2 + H(+) = (1E)-2,6-dimethylhepta-1,5-dien-1-yl formate + NADP(+) + H2O. The enzyme catalyses sulcatone + NADPH + O2 + H(+) = 4-methylpent-3-en-1-yl acetate + NADP(+) + H2O. Functionally, acts as a Baeyer-Villiger monooxygenase on a broad range of substrates. Catalyzes the insertion of an oxygen atom into a carbon-carbon bond adjacent to a carbonyl, which converts ketones to esters. Active on diverse carbonyl compounds, whereas soft nucleophiles are mostly non- or poorly reactive. In contrast with other forms of FMO it is non- or poorly active on 'classical' substrates such as drugs, pesticides, and dietary components containing soft nucleophilic heteroatoms. Able to oxidize drug molecules bearing a carbonyl group on an aliphatic chain, such as nabumetone and pentoxifylline. Also, in the absence of substrates, shows slow but yet significant NADPH oxidase activity. Acts as a positive modulator of cholesterol biosynthesis as well as glucose homeostasis, promoting metabolic aging via pleiotropic effects. In Homo sapiens (Human), this protein is Flavin-containing monooxygenase 5.